The following is a 390-amino-acid chain: Chorismate synthase 2 (390 aa).

NADP(+) contacts are provided by Arg39 and Arg45. FMN is bound by residues 132 to 134, 253 to 254, Gly298, 313 to 317, and Arg339; these read RSS, NA, and KPIPT.

The protein belongs to the chorismate synthase family. In terms of assembly, homotetramer. FMNH2 is required as a cofactor.

It catalyses the reaction 5-O-(1-carboxyvinyl)-3-phosphoshikimate = chorismate + phosphate. Its pathway is metabolic intermediate biosynthesis; chorismate biosynthesis; chorismate from D-erythrose 4-phosphate and phosphoenolpyruvate: step 7/7. Catalyzes the anti-1,4-elimination of the C-3 phosphate and the C-6 proR hydrogen from 5-enolpyruvylshikimate-3-phosphate (EPSP) to yield chorismate, which is the branch point compound that serves as the starting substrate for the three terminal pathways of aromatic amino acid biosynthesis. This reaction introduces a second double bond into the aromatic ring system. In Bacillus cereus (strain ZK / E33L), this protein is Chorismate synthase 2.